The chain runs to 162 residues: Phosphopantetheine adenylyltransferase (162 aa).

Thr-9 is a binding site for substrate. Residues 9-10 and His-17 each bind ATP; that span reads TF. Positions 41, 77, and 91 each coordinate substrate. Residues 92–94, Glu-102, and 127–133 each bind ATP; these read GLR and RQAIASK.

This sequence belongs to the bacterial CoaD family. As to quaternary structure, homohexamer. Mg(2+) serves as cofactor.

The protein resides in the cytoplasm. The catalysed reaction is (R)-4'-phosphopantetheine + ATP + H(+) = 3'-dephospho-CoA + diphosphate. It functions in the pathway cofactor biosynthesis; coenzyme A biosynthesis; CoA from (R)-pantothenate: step 4/5. Reversibly transfers an adenylyl group from ATP to 4'-phosphopantetheine, yielding dephospho-CoA (dPCoA) and pyrophosphate. This is Phosphopantetheine adenylyltransferase from Cereibacter sphaeroides (strain ATCC 17029 / ATH 2.4.9) (Rhodobacter sphaeroides).